Here is a 574-residue protein sequence, read N- to C-terminus: Excitatory amino acid transporter 2 (574 aa).

The Cytoplasmic segment spans residues 1–44; sequence MASTEGANNMPKQVEVRMHDSHLGSEEPKHRHLGLRLCDKLGKN. A phosphoserine mark is found at serine 3, serine 21, and serine 25. Cysteine 38 is lipidated: S-palmitoyl cysteine. Residues 45–64 traverse the membrane as a helical segment; that stretch reads LLLTLTVFGVILGAVCGGLL. At 65–87 the chain is on the extracellular side; that stretch reads RLASPIHPDVVMLIAFPGDILMR. Residues 88 to 108 form a helical membrane-spanning segment; it reads MLKMLILPLIISSLITGLSGL. Over 109 to 120 the chain is Cytoplasmic; sequence DAKASGRLGTRA. The helical transmembrane segment at 121-142 threads the bilayer; it reads MVYYMSTTIIAAVLGVILVLAI. At 143-235 the chain is on the extracellular side; it reads HPGNPKLKKQ…TKMVIKKGLE (93 aa). 2 N-linked (GlcNAc...) asparagine glycosylation sites follow: asparagine 206 and asparagine 216. Residues 236–259 form a helical membrane-spanning segment; it reads FKDGMNVLGLIGFFIAFGIAMGKM. Topologically, residues 260-268 are cytoplasmic; that stretch reads GDQAKLMVD. A helical transmembrane segment spans residues 269–296; the sequence is FFNILNEIVMKLVIMIMWYSPLGIACLI. At 297-317 the chain is on the extracellular side; sequence CGKIIAIKDLEVVARQLGMYM. Residues 318–339 form a helical membrane-spanning segment; that stretch reads VTVIIGLIIHGGIFLPLIYFVV. Over 340–344 the chain is Cytoplasmic; the sequence is TRKNP. Residues 345 to 375 constitute an intramembrane region (discontinuously helical); sequence FSFFAGIFQAWITALGTASSAGTLPVTFRCL. 362–364 lines the L-aspartate pocket; sequence ASS. Topologically, residues 376-384 are cytoplasmic; that stretch reads EENLGIDKR. A helical membrane pass occupies residues 385-411; it reads VTRFVLPVGATINMDGTALYEAVAAIF. Glycine 393, threonine 395, and asparagine 397 together coordinate Na(+). Threonine 401 lines the L-aspartate pocket. Residues 412–424 are Extracellular-facing; sequence IAQMNGVVLDGGQ. Positions 425–458 form an intramembrane region, discontinuously helical; that stretch reads IVTVSLTATLASVGAASIPSAGLVTMLLILTAVG. 442–446 contacts L-aspartate; it reads IPSAG. Residues 459 to 471 lie on the Extracellular side of the membrane; sequence LPTEDISLLVAVD. Residues 472–493 traverse the membrane as a helical segment; it reads WLLDRMRTSVNVVGDSFGAGIV. Residues aspartate 475 and asparagine 482 each contribute to the L-aspartate site. Na(+)-binding residues include asparagine 482 and aspartate 486. Residues 494-574 are Cytoplasmic-facing; it reads YHLSKSELDT…VEEEPWKREK (81 aa). Residues serine 506, serine 521, serine 532, and serine 534 each carry the phosphoserine modification. Phosphotyrosine is present on tyrosine 539. Serine 544, serine 560, and serine 564 each carry phosphoserine.

It belongs to the dicarboxylate/amino acid:cation symporter (DAACS) (TC 2.A.23) family. SLC1A2 subfamily. Homotrimer. Isoform 3 can oligomerize with isoform 1. Interacts with AJUBA. In terms of processing, glycosylated. Palmitoylation at Cys-38 is not required for correct subcellular localization, but is important for glutamate uptake activity.

It localises to the cell membrane. The catalysed reaction is K(+)(in) + L-glutamate(out) + 3 Na(+)(out) + H(+)(out) = K(+)(out) + L-glutamate(in) + 3 Na(+)(in) + H(+)(in). It carries out the reaction K(+)(in) + L-aspartate(out) + 3 Na(+)(out) + H(+)(out) = K(+)(out) + L-aspartate(in) + 3 Na(+)(in) + H(+)(in). The enzyme catalyses D-aspartate(out) + K(+)(in) + 3 Na(+)(out) + H(+)(out) = D-aspartate(in) + K(+)(out) + 3 Na(+)(in) + H(+)(in). In terms of biological role, sodium-dependent, high-affinity amino acid transporter that mediates the uptake of L-glutamate and also L-aspartate and D-aspartate. Functions as a symporter that transports one amino acid molecule together with two or three Na(+) ions and one proton, in parallel with the counter-transport of one K(+) ion. Mediates Cl(-) flux that is not coupled to amino acid transport; this avoids the accumulation of negative charges due to aspartate and Na(+) symport. Essential for the rapid removal of released glutamate from the synaptic cleft, and for terminating the postsynaptic action of glutamate. The sequence is that of Excitatory amino acid transporter 2 from Homo sapiens (Human).